Consider the following 22-residue polypeptide: NADH dehydrogenase [ubiquinone] 1 alpha subcomplex subunit 9 (22 aa).

A disordered region spans residues 1-22 (ASNLATGGAGPLIXKGTGGRSS).

Belongs to the complex I NDUFA9 subunit family. In terms of assembly, complex I is composed of about 45 different subunits. FAD is required as a cofactor.

The protein resides in the mitochondrion matrix. In terms of biological role, accessory subunit of the mitochondrial membrane respiratory chain NADH dehydrogenase (Complex I), that is believed not to be involved in catalysis. Complex I functions in the transfer of electrons from NADH to the respiratory chain. The immediate electron acceptor for the enzyme is believed to be ubiquinone. The sequence is that of NADH dehydrogenase [ubiquinone] 1 alpha subcomplex subunit 9 from Solanum tuberosum (Potato).